Here is a 214-residue protein sequence, read N- to C-terminus: Endosomal/vacuolar adapter protein YPT35 (214 aa).

A disordered region spans residues 1–63 (MNDKISFLPP…ATITRTRPRR (63 aa)). The PxP motif lies at 5–15 (ISFLPPEPIQL). Acidic residues predominate over residues 16-31 (LDEDSTEPELDIDSQQ). The span at 38 to 58 (SASNSNDSTSHSNDCGATITR) shows a compositional bias: low complexity. A phosphoserine mark is found at serine 65 and serine 66. The PX domain occupies 73-213 (FQKAHVSDCT…IQFLEPSKRV (141 aa)).

It belongs to the YPT35 family. As to quaternary structure, interacts with RBD2, YIF1, YIP1 and YIP4.

It localises to the endosome membrane. The protein resides in the vacuole membrane. Functionally, recruits the lipid transfer protein VPS13 to endosomal and vacuolar membranes. This chain is Endosomal/vacuolar adapter protein YPT35 (YPT35), found in Saccharomyces cerevisiae (strain YJM789) (Baker's yeast).